A 304-amino-acid polypeptide reads, in one-letter code: Probable UDP-3-O-acylglucosamine N-acyltransferase 2, mitochondrial (304 aa).

Residues 1-47 (MAATLWRLYSKSICNSLQGIILNKPFIQKQLLLSSRTRSLSFSSDSQ) constitute a mitochondrion transit peptide. UDP-N-acetyl-alpha-D-glucosamine is bound at residue 159-161 (FGF). The hexadecanoate site is built by Asp-209 and Gln-213. His-216 serves as the catalytic Proton acceptor. Residues Asn-217, Ser-235, and His-253 each contribute to the UDP-N-acetyl-alpha-D-glucosamine site.

Belongs to the transferase hexapeptide repeat family. LpxD subfamily. As to quaternary structure, homotrimer.

The protein localises to the mitochondrion. It carries out the reaction a UDP-3-O-[(3R)-3-hydroxyacyl]-alpha-D-glucosamine + a (3R)-hydroxyacyl-[ACP] = a UDP-2-N,3-O-bis[(3R)-3-hydroxyacyl]-alpha-D-glucosamine + holo-[ACP] + H(+). It participates in glycolipid biosynthesis; lipid IV(A) biosynthesis; lipid IV(A) from (3R)-3-hydroxytetradecanoyl-[acyl-carrier-protein] and UDP-N-acetyl-alpha-D-glucosamine: step 3/6. Involved in the biosynthesis of lipid A, a phosphorylated glycolipid that in bacteria anchors the lipopolysaccharide to the outer membrane of the cell. Lipid A-like molecules in plants may serve as structural components of the outer membranes of mitochondria and/or chloroplasts, or may be involved in signal transduction or plant defense responses. The protein is Probable UDP-3-O-acylglucosamine N-acyltransferase 2, mitochondrial (LPXD2) of Arabidopsis thaliana (Mouse-ear cress).